The primary structure comprises 124 residues: Large ribosomal subunit protein bL12 (124 aa).

The protein belongs to the bacterial ribosomal protein bL12 family. Homodimer. Part of the ribosomal stalk of the 50S ribosomal subunit. Forms a multimeric L10(L12)X complex, where L10 forms an elongated spine to which 2 to 4 L12 dimers bind in a sequential fashion. Binds GTP-bound translation factors.

Forms part of the ribosomal stalk which helps the ribosome interact with GTP-bound translation factors. Is thus essential for accurate translation. This chain is Large ribosomal subunit protein bL12, found in Ralstonia nicotianae (strain ATCC BAA-1114 / GMI1000) (Ralstonia solanacearum).